Consider the following 445-residue polypeptide: Methionine aminopeptidase 2 (445 aa).

The disordered stretch occupies residues 1 to 89 (MAAQAPVDEI…DPPRVLISQL (89 aa)). The span at 60–74 (AKKKKKRKPKKKKKN) shows a compositional bias: basic residues. Residue His198 coordinates substrate. The a divalent metal cation site is built by Asp218, Asp229, and His298. Position 306 (His306) interacts with substrate. Residues Glu331 and Glu426 each contribute to the a divalent metal cation site.

The protein belongs to the peptidase M24A family. Methionine aminopeptidase eukaryotic type 2 subfamily. The cofactor is Co(2+). Requires Zn(2+) as cofactor. Mn(2+) is required as a cofactor. It depends on Fe(2+) as a cofactor.

It is found in the cytoplasm. It carries out the reaction Release of N-terminal amino acids, preferentially methionine, from peptides and arylamides.. Its function is as follows. Cotranslationally removes the N-terminal methionine from nascent proteins. The N-terminal methionine is often cleaved when the second residue in the primary sequence is small and uncharged (Met-Ala-, Cys, Gly, Pro, Ser, Thr, or Val). The sequence is that of Methionine aminopeptidase 2 from Podospora anserina (strain S / ATCC MYA-4624 / DSM 980 / FGSC 10383) (Pleurage anserina).